The chain runs to 531 residues: Peptide chain release factor 3 (531 aa).

The tr-type G domain occupies 11–280 (GRRRTFAIIS…AFIRFASRPG (270 aa)). Residues 20–27 (SHPDAGKT), 88–92 (DTPGH), and 142–145 (NKLD) contribute to the GTP site.

The protein belongs to the TRAFAC class translation factor GTPase superfamily. Classic translation factor GTPase family. PrfC subfamily.

The protein resides in the cytoplasm. In terms of biological role, increases the formation of ribosomal termination complexes and stimulates activities of RF-1 and RF-2. It binds guanine nucleotides and has strong preference for UGA stop codons. It may interact directly with the ribosome. The stimulation of RF-1 and RF-2 is significantly reduced by GTP and GDP, but not by GMP. The polypeptide is Peptide chain release factor 3 (Gloeobacter violaceus (strain ATCC 29082 / PCC 7421)).